Reading from the N-terminus, the 174-residue chain is Disulfide bond formation protein B (174 aa).

The Cytoplasmic segment spans residues 1-14; sequence MLNFLNICSKTRKS. The helical transmembrane segment at 15-31 threads the bilayer; it reads WVLLIFTVVILELIALY. The Periplasmic segment spans residues 32–49; it reads LQHIVLIKPCVLCVYQRC. Cys-41 and Cys-44 form a disulfide bridge. A helical membrane pass occupies residues 50–65; that stretch reads ALCGIGIAGLIGTIAP. The Cytoplasmic segment spans residues 66 to 71; sequence FTPLRF. The helical transmembrane segment at 72–89 threads the bilayer; sequence FSIPIWIYSAWKGLLLAK. Residues 90–144 lie on the Periplasmic side of the membrane; sequence EYTDIQLHPSPFFMCDLFVQFPHWLPLNKWWPSMFDADGDCAEYKWYFLSLEISQ. Cys-104 and Cys-130 are oxidised to a cystine. The chain crosses the membrane as a helical span at residues 145–163; it reads WMLIIFANYLIIAILVSLS. The Cytoplasmic portion of the chain corresponds to 164–174; that stretch reads QIIDLKKWNNK.

It belongs to the DsbB family.

The protein resides in the cell inner membrane. In terms of biological role, required for disulfide bond formation in some periplasmic proteins. Acts by oxidizing the DsbA protein. In Blochmanniella pennsylvanica (strain BPEN), this protein is Disulfide bond formation protein B.